A 465-amino-acid polypeptide reads, in one-letter code: Methylenetetrahydrofolate--tRNA-(uracil-5-)-methyltransferase TrmFO (465 aa).

3 to 8 provides a ligand contact to FAD; sequence GAGLAG.

The protein belongs to the MnmG family. TrmFO subfamily. FAD serves as cofactor.

It localises to the cytoplasm. It carries out the reaction uridine(54) in tRNA + (6R)-5,10-methylene-5,6,7,8-tetrahydrofolate + NADH + H(+) = 5-methyluridine(54) in tRNA + (6S)-5,6,7,8-tetrahydrofolate + NAD(+). The enzyme catalyses uridine(54) in tRNA + (6R)-5,10-methylene-5,6,7,8-tetrahydrofolate + NADPH + H(+) = 5-methyluridine(54) in tRNA + (6S)-5,6,7,8-tetrahydrofolate + NADP(+). Functionally, catalyzes the folate-dependent formation of 5-methyl-uridine at position 54 (M-5-U54) in all tRNAs. The protein is Methylenetetrahydrofolate--tRNA-(uracil-5-)-methyltransferase TrmFO of Bradyrhizobium sp. (strain BTAi1 / ATCC BAA-1182).